Here is a 743-residue protein sequence, read N- to C-terminus: Type VI secretion system spike protein VgrG1 (743 aa).

This sequence belongs to the VgrG protein family.

It localises to the secreted. The enzyme catalyses L-arginyl-[protein] + NAD(+) = N(omega)-(ADP-D-ribosyl)-L-arginyl-[protein] + nicotinamide + H(+). Functionally, part of the type VI secretion system specialized secretion system, which delivers several virulence factors in both prokaryotic and eukaryotic cells during infection. Acts directly as an secreted effector with an actin ADP-ribosyltransferase activity that disrupts the host actin cytoskeleton, leading to a decrease in host cell viability and an increase in apoptosis. This chain is Type VI secretion system spike protein VgrG1 (vgrG1), found in Aeromonas hydrophila subsp. hydrophila (strain ATCC 7966 / DSM 30187 / BCRC 13018 / CCUG 14551 / JCM 1027 / KCTC 2358 / NCIMB 9240 / NCTC 8049).